The sequence spans 271 residues: Ribosomal RNA small subunit methyltransferase A (271 aa).

Positions 20, 45, 66, 90, and 112 each coordinate S-adenosyl-L-methionine.

The protein belongs to the class I-like SAM-binding methyltransferase superfamily. rRNA adenine N(6)-methyltransferase family. RsmA subfamily.

It localises to the cytoplasm. The enzyme catalyses adenosine(1518)/adenosine(1519) in 16S rRNA + 4 S-adenosyl-L-methionine = N(6)-dimethyladenosine(1518)/N(6)-dimethyladenosine(1519) in 16S rRNA + 4 S-adenosyl-L-homocysteine + 4 H(+). Specifically dimethylates two adjacent adenosines (A1518 and A1519) in the loop of a conserved hairpin near the 3'-end of 16S rRNA in the 30S particle. May play a critical role in biogenesis of 30S subunits. In Blochmanniella floridana, this protein is Ribosomal RNA small subunit methyltransferase A.